The primary structure comprises 291 residues: Phosphoribulokinase (291 aa).

Residue 12–20 participates in ATP binding; that stretch reads GSSGAGTTS.

The protein belongs to the phosphoribulokinase family. Homooctamer.

It carries out the reaction D-ribulose 5-phosphate + ATP = D-ribulose 1,5-bisphosphate + ADP + H(+). It participates in carbohydrate biosynthesis; Calvin cycle. The polypeptide is Phosphoribulokinase (cbbP) (Xanthobacter flavus).